A 111-amino-acid polypeptide reads, in one-letter code: Large ribosomal subunit protein uL24 (111 aa).

The disordered stretch occupies residues 85-111 (NTNDPRRKDIINRKASRQKEEQGGKAQ). Basic and acidic residues predominate over residues 88–111 (DPRRKDIINRKASRQKEEQGGKAQ).

Belongs to the universal ribosomal protein uL24 family. In terms of assembly, part of the 50S ribosomal subunit.

One of two assembly initiator proteins, it binds directly to the 5'-end of the 23S rRNA, where it nucleates assembly of the 50S subunit. Functionally, located at the polypeptide exit tunnel on the outside of the subunit. This Metallosphaera sedula (strain ATCC 51363 / DSM 5348 / JCM 9185 / NBRC 15509 / TH2) protein is Large ribosomal subunit protein uL24.